The following is a 272-amino-acid chain: MKVIMTTKVDKASMNIMQKLIENFGFKETELKFDGNPVYKKDDMVILTTNDEMIYYDYLDREIEKQLSFKPEIIAFASRHSSKQKLPALTTHVTGNWGEAMYGGKDESFAIAIPSAMKLALLKMNELNDLGWTVCYEATHHGPSELEVPSFFIEIGSSEEEWVNDRAGEIIAETIVYVLDNYENSKFKVALGIGGGHYAPKQTKRALNSDLAFGHILPKYAQPVSRDVILKAINRFHEKVEAIYVDWKGSKGETRQLAKSLAQELGLEFIKD.

In terms of assembly, monomer. It depends on Zn(2+) as a cofactor.

The catalysed reaction is a D-aminoacyl-tRNA + H2O = a tRNA + a D-alpha-amino acid + H(+). The enzyme catalyses glycyl-tRNA(Ala) + H2O = tRNA(Ala) + glycine + H(+). It catalyses the reaction D-tyrosyl-tRNA(Tyr) + H2O = D-tyrosine + tRNA(Tyr). In terms of biological role, D-aminoacyl-tRNA deacylase with broad substrate specificity. By recycling D-aminoacyl-tRNA to D-amino acids and free tRNA molecules, this enzyme counteracts the toxicity associated with the formation of D-aminoacyl-tRNA entities in vivo. Catalyzes the hydrolysis of D-tyrosyl-tRNA(Tyr) and D-aspartyl-tRNA(Asp). This is D-aminoacyl-tRNA deacylase from Pyrococcus abyssi (strain GE5 / Orsay).